The chain runs to 243 residues: Ubiquinone/menaquinone biosynthesis C-methyltransferase UbiE (243 aa).

Residues threonine 69, aspartate 90, and 116-117 (DA) contribute to the S-adenosyl-L-methionine site.

This sequence belongs to the class I-like SAM-binding methyltransferase superfamily. MenG/UbiE family.

It carries out the reaction a 2-demethylmenaquinol + S-adenosyl-L-methionine = a menaquinol + S-adenosyl-L-homocysteine + H(+). It catalyses the reaction a 2-methoxy-6-(all-trans-polyprenyl)benzene-1,4-diol + S-adenosyl-L-methionine = a 5-methoxy-2-methyl-3-(all-trans-polyprenyl)benzene-1,4-diol + S-adenosyl-L-homocysteine + H(+). The protein operates within quinol/quinone metabolism; menaquinone biosynthesis; menaquinol from 1,4-dihydroxy-2-naphthoate: step 2/2. It functions in the pathway cofactor biosynthesis; ubiquinone biosynthesis. Functionally, methyltransferase required for the conversion of demethylmenaquinol (DMKH2) to menaquinol (MKH2) and the conversion of 2-polyprenyl-6-methoxy-1,4-benzoquinol (DDMQH2) to 2-polyprenyl-3-methyl-6-methoxy-1,4-benzoquinol (DMQH2). This is Ubiquinone/menaquinone biosynthesis C-methyltransferase UbiE from Paraburkholderia phymatum (strain DSM 17167 / CIP 108236 / LMG 21445 / STM815) (Burkholderia phymatum).